The sequence spans 422 residues: Adhesin YadA (422 aa).

A signal peptide spans 1–25 (MTKDFKISVSAALISALFSSPYAFA). A surface exposed passenger domain region spans residues 26–330 (NNDEVHFTAV…KKAIRESNQY (305 aa)). The stretch at 206–236 (VNVAQLKKEIEKTQVNANKKSAEVLGIANNY) forms a coiled coil. The tract at residues 331–368 (TDHKFRQLDNRLDKLDTRVDKGLASSAALNSLFQPYGV) is outer membrane translocation of the passenger domain. The next 4 membrane-spanning stretches (beta stranded) occupy residues 369–379 (GKVNFTAGVGG), 383–394 (SQALAIGSGYRV), 401–407 (KAGVAYA), and 411–422 (DVMYNASFNIEW). The interval 369-422 (GKVNFTAGVGGYRSSQALAIGSGYRVNESVALKAGVAYAGSSDVMYNASFNIEW) is translocator domain.

It belongs to the autotransporter-2 (AT-2) (TC 1.B.40) family. In terms of assembly, homotrimer; trimers are very stable, not disrupted by heating at 95 degrees Celsius for 10 minutes in SDS sample buffer.

The protein resides in the cell surface. Its subcellular location is the cell outer membrane. Collagen-binding outer membrane protein forming a fibrillar matrix on the bacterial cell surface and phagocytosis resistance. Promotes initial attachment and invasion of eukaryotic cells. Also protects the bacteria by being responsible for agglutination, serum resistance and complement inactivation. Gly-389 plays an important role in this protein; replacing it with increasingly large polar residues decreases expression levels and trimer stability. Residues larger than Ser (Thr, Asn or His) significantly decrease serume resistance and bacterial autoagglution without affecting adhesion to host cells or host cell cytokine production. The polypeptide is Adhesin YadA (Yersinia enterocolitica serotype O:8 / biotype 1B (strain NCTC 13174 / 8081)).